We begin with the raw amino-acid sequence, 349 residues long: MIEFDNLTYLHGKPQGTGLLKANPEDFVVVEDLGFEPDGEGEHILVRILKNGCNTRFVADALAKFLKIHAREVSFAGQKDKHAVTEQWLCARVPGKEMPDLSAFQLEGCQVLEYARHKRKLRLGALKGNAFTLVLREVSNRDDVEQRLIDICVKGVPNYFGAQRFGIGGSNLQGALRWAQTNTPVRDRNKRSFWLSAARSALFNQIVAERLKKADVNQVVDGDALQLAGRGSWFVATTEEVAELQRRVNDKELMITAALPGSGEWGTQREALAFEQAAVAAETELQALLVREKVEAARRAMLLYPQQLSWNWWDDVTVEIRFWLPAGSFATSVVRELINTTGDYAHIAE.

F27 contributes to the substrate binding site. Residue D80 is the Nucleophile of the active site. Residue N129 coordinates substrate. Positions 155–303 (GVPNYFGAQR…VEAARRAMLL (149 aa)) constitute a TRUD domain. F329 provides a ligand contact to substrate.

The protein belongs to the pseudouridine synthase TruD family.

The enzyme catalyses uridine(13) in tRNA = pseudouridine(13) in tRNA. Its function is as follows. Responsible for synthesis of pseudouridine from uracil-13 in transfer RNAs. In Escherichia coli (strain SMS-3-5 / SECEC), this protein is tRNA pseudouridine synthase D.